Reading from the N-terminus, the 383-residue chain is Agmatine deiminase (383 aa).

Residues D220 and D226 each contribute to the agmatine site. Catalysis depends on C366, which acts as the Amidino-cysteine intermediate.

This sequence belongs to the agmatine deiminase family. Forms homodimers.

The enzyme catalyses agmatine + H2O = N-carbamoylputrescine + NH4(+). It participates in amine and polyamine biosynthesis; putrescine biosynthesis via agmatine pathway; N-carbamoylputrescine from agmatine: step 1/1. With respect to regulation, inhibited by N-ethylmaleimide and iodoacetamide. Functionally, mediates the hydrolysis of agmatine into N-carbamoylputrescine in the arginine decarboxylase (ADC) pathway of putrescine biosynthesis, a basic polyamine. The protein is Agmatine deiminase (AIH) of Arabidopsis thaliana (Mouse-ear cress).